Consider the following 352-residue polypeptide: Pyruvate dehydrogenase E1 component subunit beta, mitochondrial (352 aa).

The N-terminal 21 residues, 1–21 (MALRKCGNLFVARLAGTSTRA), are a transit peptide targeting the mitochondrion. Glu-81 is a binding site for thiamine diphosphate. Ile-134, Ala-182, Ile-183, Asp-185, and Asn-187 together coordinate K(+).

In terms of assembly, tetramer of 2 alpha and 2 beta subunits. Requires thiamine diphosphate as cofactor.

Its subcellular location is the mitochondrion matrix. The enzyme catalyses N(6)-[(R)-lipoyl]-L-lysyl-[protein] + pyruvate + H(+) = N(6)-[(R)-S(8)-acetyldihydrolipoyl]-L-lysyl-[protein] + CO2. Its function is as follows. The pyruvate dehydrogenase complex catalyzes the overall conversion of pyruvate to acetyl-CoA and CO(2). It contains multiple copies of three enzymatic components: pyruvate dehydrogenase (E1), dihydrolipoamide acetyltransferase (E2) and lipoamide dehydrogenase (E3). The polypeptide is Pyruvate dehydrogenase E1 component subunit beta, mitochondrial (pdhb-1) (Caenorhabditis elegans).